The primary structure comprises 69 residues: Pancreatic secretory trypsin inhibitor (69 aa).

The Kazal-like domain maps to 8-65 (TGTEAACSNYDLKKGCAKIFDPVCGTDNILYSNECLLCFQNLQRKTNVRIKRRGTCQE). Disulfide bonds link Cys14-Cys45, Cys23-Cys42, and Cys31-Cys63.

It is found in the secreted. Functionally, this is a trypsin inhibitor, its physiological function is to prevent the trypsin-catalyzed premature activation of zymogens within the pancreas. The protein is Pancreatic secretory trypsin inhibitor (SPINK1) of Struthio camelus (Common ostrich).